A 137-amino-acid polypeptide reads, in one-letter code: Large ribosomal subunit protein uL13 (137 aa).

The protein belongs to the universal ribosomal protein uL13 family. In terms of assembly, part of the 50S ribosomal subunit.

Its function is as follows. This protein is one of the early assembly proteins of the 50S ribosomal subunit, although it is not seen to bind rRNA by itself. It is important during the early stages of 50S assembly. The protein is Large ribosomal subunit protein uL13 of Methanococcus maripaludis (strain DSM 14266 / JCM 13030 / NBRC 101832 / S2 / LL).